We begin with the raw amino-acid sequence, 480 residues long: Mannose-1-phosphate guanylyltransferase ManC (480 aa).

It belongs to the mannose-6-phosphate isomerase type 2 family.

The enzyme catalyses alpha-D-mannose 1-phosphate + GTP + H(+) = GDP-alpha-D-mannose + diphosphate. The protein operates within nucleotide-sugar biosynthesis; GDP-alpha-D-mannose biosynthesis; GDP-alpha-D-mannose from alpha-D-mannose 1-phosphate (GTP route): step 1/1. Functionally, involved in the biosynthesis of the capsular polysaccharide colanic acid. This Salmonella typhimurium (strain LT2 / SGSC1412 / ATCC 700720) protein is Mannose-1-phosphate guanylyltransferase ManC (manC).